Consider the following 230-residue polypeptide: Cytochrome c oxidase subunit 2 (230 aa).

Over 1–14 (MAHPAQLGFQDAAS) the chain is Mitochondrial intermembrane. A helical transmembrane segment spans residues 15 to 45 (PVMEELLCFHDHALMIVFLISTLVLYIIIAM). Over 46–59 (VSTKLTNKFILDSQ) the chain is Mitochondrial matrix. Residues 60–87 (EIEIVWTVLPAIILILIALPSLRILYLM) form a helical membrane-spanning segment. Residues 88–230 (DEINDPHVTI…NWSSAMLEDA (143 aa)) lie on the Mitochondrial intermembrane side of the membrane. Residues His161, Cys196, Glu198, Cys200, His204, and Met207 each coordinate Cu cation. Glu198 contacts Mg(2+).

The protein belongs to the cytochrome c oxidase subunit 2 family. In terms of assembly, component of the cytochrome c oxidase (complex IV, CIV), a multisubunit enzyme composed of 14 subunits. The complex is composed of a catalytic core of 3 subunits MT-CO1, MT-CO2 and MT-CO3, encoded in the mitochondrial DNA, and 11 supernumerary subunits COX4I, COX5A, COX5B, COX6A, COX6B, COX6C, COX7A, COX7B, COX7C, COX8 and NDUFA4, which are encoded in the nuclear genome. The complex exists as a monomer or a dimer and forms supercomplexes (SCs) in the inner mitochondrial membrane with NADH-ubiquinone oxidoreductase (complex I, CI) and ubiquinol-cytochrome c oxidoreductase (cytochrome b-c1 complex, complex III, CIII), resulting in different assemblies (supercomplex SCI(1)III(2)IV(1) and megacomplex MCI(2)III(2)IV(2)). Found in a complex with TMEM177, COA6, COX18, COX20, SCO1 and SCO2. Interacts with TMEM177 in a COX20-dependent manner. Interacts with COX20. Interacts with COX16. Cu cation serves as cofactor.

Its subcellular location is the mitochondrion inner membrane. It carries out the reaction 4 Fe(II)-[cytochrome c] + O2 + 8 H(+)(in) = 4 Fe(III)-[cytochrome c] + 2 H2O + 4 H(+)(out). In terms of biological role, component of the cytochrome c oxidase, the last enzyme in the mitochondrial electron transport chain which drives oxidative phosphorylation. The respiratory chain contains 3 multisubunit complexes succinate dehydrogenase (complex II, CII), ubiquinol-cytochrome c oxidoreductase (cytochrome b-c1 complex, complex III, CIII) and cytochrome c oxidase (complex IV, CIV), that cooperate to transfer electrons derived from NADH and succinate to molecular oxygen, creating an electrochemical gradient over the inner membrane that drives transmembrane transport and the ATP synthase. Cytochrome c oxidase is the component of the respiratory chain that catalyzes the reduction of oxygen to water. Electrons originating from reduced cytochrome c in the intermembrane space (IMS) are transferred via the dinuclear copper A center (CU(A)) of subunit 2 and heme A of subunit 1 to the active site in subunit 1, a binuclear center (BNC) formed by heme A3 and copper B (CU(B)). The BNC reduces molecular oxygen to 2 water molecules using 4 electrons from cytochrome c in the IMS and 4 protons from the mitochondrial matrix. The polypeptide is Cytochrome c oxidase subunit 2 (mt-co2) (Danio rerio (Zebrafish)).